The primary structure comprises 642 residues: Threonine--tRNA ligase (642 aa).

In terms of domain architecture, TGS spans 1–61 (MPVITLPDGS…ENDATLAIIT (61 aa)). Positions 243–534 (DHRKIGKQLD…LTEEFAGFFP (292 aa)) are catalytic. Residues C334, H385, and H511 each coordinate Zn(2+).

Belongs to the class-II aminoacyl-tRNA synthetase family. As to quaternary structure, homodimer. The cofactor is Zn(2+).

The protein localises to the cytoplasm. The enzyme catalyses tRNA(Thr) + L-threonine + ATP = L-threonyl-tRNA(Thr) + AMP + diphosphate + H(+). In terms of biological role, catalyzes the attachment of threonine to tRNA(Thr) in a two-step reaction: L-threonine is first activated by ATP to form Thr-AMP and then transferred to the acceptor end of tRNA(Thr). Also edits incorrectly charged L-seryl-tRNA(Thr). The chain is Threonine--tRNA ligase from Salmonella paratyphi C (strain RKS4594).